The primary structure comprises 140 residues: HTH-type transcriptional regulator YfmP (140 aa).

The region spanning Met1–Thr73 is the HTH merR-type domain. The segment at residues Ile6 to Glu25 is a DNA-binding region (H-T-H motif).

Repressor of the yfmOP operon. A mutation in yfmP leads to overexpression of yfmO, probably causing a decrease in cellular copper that is eventually responsible for a reduced copper induction of copZA. The polypeptide is HTH-type transcriptional regulator YfmP (yfmP) (Bacillus subtilis (strain 168)).